A 192-amino-acid chain; its full sequence is Inosine triphosphate pyrophosphatase (192 aa).

10–15 (TGNANK) is an ITP binding site. Glu-43 is a Mg(2+) binding site. Residues Lys-56, 74–75 (DT), Lys-91, 149–152 (FGWD), Lys-173, and 178–179 (HR) contribute to the ITP site.

This sequence belongs to the HAM1 NTPase family. As to quaternary structure, homodimer. Requires Mg(2+) as cofactor. The cofactor is Mn(2+).

The protein localises to the cytoplasm. It is found in the nucleus. The catalysed reaction is ITP + H2O = IMP + diphosphate + H(+). It catalyses the reaction dITP + H2O = dIMP + diphosphate + H(+). It carries out the reaction XTP + H2O = XMP + diphosphate + H(+). Its function is as follows. Pyrophosphatase that hydrolyzes non-canonical purine nucleotides such as inosine triphosphate (ITP), deoxyinosine triphosphate (dITP) or xanthosine 5'-triphosphate (XTP) to their respective monophosphate derivatives. The enzyme does not distinguish between the deoxy- and ribose forms. Probably excludes non-canonical purines from RNA and DNA precursor pools, thus preventing their incorporation into RNA and DNA and avoiding chromosomal lesions. This chain is Inosine triphosphate pyrophosphatase, found in Candida glabrata (strain ATCC 2001 / BCRC 20586 / JCM 3761 / NBRC 0622 / NRRL Y-65 / CBS 138) (Yeast).